The primary structure comprises 411 residues: UPF0261 protein SACE_5696 (411 aa).

The protein belongs to the UPF0261 family.

The chain is UPF0261 protein SACE_5696 from Saccharopolyspora erythraea (strain ATCC 11635 / DSM 40517 / JCM 4748 / NBRC 13426 / NCIMB 8594 / NRRL 2338).